We begin with the raw amino-acid sequence, 780 residues long: ATPase family gene 2 protein (780 aa).

Residues 1–23 show a composition bias toward low complexity; that stretch reads MAPKSSSSGSKKKSSASSNSADA. The tract at residues 1–26 is disordered; the sequence is MAPKSSSSGSKKKSSASSNSADAKAS. ATP-binding positions include 286–293 and 557–564; these read GPPGTGKT and GPPGCSKT.

It belongs to the AAA ATPase family. AFG2 subfamily. As to quaternary structure, homohexamer; ATP binding induces oligomerization. Forms a ring-shaped particle of about 12 nm diameter, that displays 6-fold radial symmetry. Associates with cytoplasmic pre-60S ribosomal particles containing ARX1, ALB1, RLP24 and NOG1. Binds to pre-60S ribosomal particles soon after their export from the nucleus and is released before REI1 and LSG1 are incorporated into the particles. Hexameric form interacts with RLP24 (via C-terminal); the interaction recruits AFG2 to pre-60S ribosomal particles and promotes AFG2 ATPase activity and RLP24 release from pre-60S ribosomal particles. Interacts (via N-terminus) with nucleoporin NUP116 (via N-terminus); the interaction is required for RLP24 release from pre-60S ribosomal particles.

It localises to the cytoplasm. It catalyses the reaction ATP + H2O = ADP + phosphate + H(+). The hexamer is activated by RLP24 during pre-60S ribosomal particle maturation; RLP24 activates ATPase activity of both ATP-binding regions and increases cooperativity between AFG2 subunits. The second ATP-binding region is inhibited by diazaborine; the inhibition requires prior ATP binding specifically to the second ATP-binding region. Its function is as follows. ATP-dependent chaperone which uses the energy provided by ATP hydrolysis to generate mechanical force to disassemble protein complexes. Plays an essential role in the cytoplasmic maturation steps of pre-60S ribosomal particles by promoting the release of shuttling protein RLP24 from the pre-ribosomal particles. This step facilitates the subsequent release of other shuttling proteins such as NOG1 and allows the transition of the pre-ribosomal particles to later maturation forms that bind REI1. Essential for viability. The polypeptide is ATPase family gene 2 protein (Saccharomyces cerevisiae (strain ATCC 204508 / S288c) (Baker's yeast)).